A 370-amino-acid chain; its full sequence is Putative F-box protein At1g47390 (370 aa).

The F-box domain occupies 1–47; the sequence is MAPEEKLPCELIEEILSRVPPESLVRFRTVSKKWNALFDDKMFINNH.

This Arabidopsis thaliana (Mouse-ear cress) protein is Putative F-box protein At1g47390.